The following is a 389-amino-acid chain: STE20-related kinase adapter protein alpha (389 aa).

The region spanning 11–321 (YELLTIIGRG…AGALLNHPFF (311 aa)) is the Protein kinase domain.

Belongs to the protein kinase superfamily. STE Ser/Thr protein kinase family. STE20 subfamily. Component of a trimeric complex composed of STK11/LKB1, STRAD (STRADA or STRADB) and CAB39/MO25 (CAB39/MO25alpha or CAB39L/MO25beta): the complex tethers STK11/LKB1 in the cytoplasm and stimulates its catalytic activity. Expressed in brain, hypothalamus, heart and skeletal muscle.

The protein localises to the nucleus. The protein resides in the cytoplasm. Its function is as follows. Pseudokinase which, in complex with CAB39/MO25 (CAB39/MO25alpha or CAB39L/MO25beta), binds to and activates STK11/LKB1. Adopts a closed conformation typical of active protein kinases and binds STK11/LKB1 as a pseudosubstrate, promoting conformational change of STK11/LKB1 in an active conformation. The polypeptide is STE20-related kinase adapter protein alpha (STRADA) (Gallus gallus (Chicken)).